We begin with the raw amino-acid sequence, 359 residues long: Histidinol-phosphate aminotransferase (359 aa).

Lys-217 is modified (N6-(pyridoxal phosphate)lysine).

The protein belongs to the class-II pyridoxal-phosphate-dependent aminotransferase family. Histidinol-phosphate aminotransferase subfamily. In terms of assembly, homodimer. It depends on pyridoxal 5'-phosphate as a cofactor.

The enzyme catalyses L-histidinol phosphate + 2-oxoglutarate = 3-(imidazol-4-yl)-2-oxopropyl phosphate + L-glutamate. It functions in the pathway amino-acid biosynthesis; L-histidine biosynthesis; L-histidine from 5-phospho-alpha-D-ribose 1-diphosphate: step 7/9. This chain is Histidinol-phosphate aminotransferase, found in Salmonella heidelberg (strain SL476).